A 208-amino-acid chain; its full sequence is MDATIKVTKPVLKQKDSSAANLVAAIYGLLFVSGEKGLTLAELNRVLRKVGLEKIKAALVQLERKLSLDDESGIEIKKFGHSFRLVTKMEIKDFIHRYLPNKIKNPLNSKTMEVLAIIAYNQPCTRPRINEIRGADSFQIVDDLLEKELIVELGRKDTPGRPFIYEVSPKFYDLFGINSLDELPKVENFDLDKFRQGSFFDSNRYGDD.

The protein belongs to the ScpB family. In terms of assembly, homodimer. Homodimerization may be required to stabilize the binding of ScpA to the Smc head domains. Component of a cohesin-like complex composed of ScpA, ScpB and the Smc homodimer, in which ScpA and ScpB bind to the head domain of Smc. The presence of the three proteins is required for the association of the complex with DNA.

The protein resides in the cytoplasm. Its function is as follows. Participates in chromosomal partition during cell division. May act via the formation of a condensin-like complex containing Smc and ScpA that pull DNA away from mid-cell into both cell halves. The chain is Segregation and condensation protein B from Mycoplasma pneumoniae (strain ATCC 29342 / M129 / Subtype 1) (Mycoplasmoides pneumoniae).